A 90-amino-acid chain; its full sequence is Serine-rich and transmembrane domain-containing 2 (90 aa).

N-linked (GlcNAc...) asparagine glycosylation is present at N11. Residues 38–58 (YVGLFLSLLAILLILLFTMLL) traverse the membrane as a helical segment. A disordered region spans residues 69-90 (SDSTESVPQFTDVEMQSRIPTP).

The protein localises to the membrane. This Homo sapiens (Human) protein is Serine-rich and transmembrane domain-containing 2.